The chain runs to 79 residues: Morintide mO2 (79 aa).

Residues 1 to 20 (MAKLSFLSLFLLCLVATATA) form the signal peptide. Residues 21 to 63 (QNCGRQAGNRACANGLCCSQYGFCGSTSEYCSRANGCQSNCRG) enclose the Chitin-binding type-1 domain. Intrachain disulfides connect cysteine 23-cysteine 38, cysteine 32-cysteine 44, cysteine 37-cysteine 51, and cysteine 57-cysteine 61. The propeptide occupies 64–79 (GGGAGGAGGGAGGGSP).

Leaves (at protein level).

Chitin-binding protein which functions in defense against chitin-containing fungal pathogens. The protein is Morintide mO2 of Moringa oleifera (Horseradish tree).